We begin with the raw amino-acid sequence, 331 residues long: Serine racemase (331 aa).

ATP contacts are provided by Ser34 and Lys54. The Proton acceptor role is filled by Lys59. The residue at position 59 (Lys59) is an N6-(pyridoxal phosphate)lysine. Position 81 (Thr81) interacts with Ca(2+). Catalysis depends on Ser84, which acts as the Proton acceptor. Asn86 contributes to the pyridoxal 5'-phosphate binding site. Tyr121 contacts ATP. Asp178 contributes to the Mg(2+) binding site. Residues Gly186, Gly187, and Gly188 each contribute to the pyridoxal 5'-phosphate site. The Ca(2+) site is built by Glu210, Ala214, and Asp216. Mg(2+) contacts are provided by Glu210, Ala214, and Asp216. The Mn(2+) site is built by Glu210, Ala214, and Asp216. An ATP-binding site is contributed by Lys278. Ser314 serves as a coordination point for pyridoxal 5'-phosphate. Asn317 serves as a coordination point for ATP.

Belongs to the serine/threonine dehydratase family. In terms of assembly, homodimer. It depends on Mg(2+) as a cofactor. Requires Mn(2+) as cofactor. The cofactor is Ca(2+). Pyridoxal 5'-phosphate is required as a cofactor. As to expression, expressed in the whole plant.

It carries out the reaction L-serine = D-serine. The enzyme catalyses L-serine = pyruvate + NH4(+). It catalyses the reaction D-serine = pyruvate + NH4(+). With respect to regulation, inhibited by hydroxylamine. Racemase activity is enhanced by Ca(2+), Mg(2+), Mn(2+), and is decreased by Ni(2+), Zn(2+). Hydratase activity is enhanced by Ca(2+), Mg(2+), Mn(2+), Cu(2+), Fe(2+), Ni(2+). Functionally, catalyzes the synthesis of D-serine from L-serine. Has dehydratase activity towards both L-serine and D-serine. Displays high substrate specificity for L-serine, whereas L-alanine, L-arginine, and L-glutamine were poor substrates. The polypeptide is Serine racemase (SR) (Arabidopsis thaliana (Mouse-ear cress)).